Reading from the N-terminus, the 192-residue chain is Casparian strip membrane protein 1 (192 aa).

Over 1–30 the chain is Cytoplasmic; sequence MSTTVDVPESSNVAKGKAIAVARPGGWKKG. A helical transmembrane segment spans residues 31-51; the sequence is LAIMDFILRLGGIAASLGAAA. At 52-80 the chain is on the extracellular side; it reads TMGTSDQTLPFFTQFFQFEASYDSFTTFQ. The helical transmembrane segment at 81 to 101 threads the bilayer; sequence FFVITMALVAGYLVLSLPFSV. The Cytoplasmic portion of the chain corresponds to 102 to 113; it reads VAIIRPHAPGPR. Residues 114 to 134 form a helical membrane-spanning segment; the sequence is LFLIILDTVFLTLATASGASA. The Extracellular segment spans residues 135–166; the sequence is AAIVYLAHNGNQDSNWLAICNQFGDFCAQTSG. A helical membrane pass occupies residues 167 to 187; sequence AVVASFVAVVILVLLVIMSAL. The Cytoplasmic portion of the chain corresponds to 188-192; the sequence is ALRRH.

This sequence belongs to the Casparian strip membrane proteins (CASP) family. Homodimer and heterodimers.

The protein localises to the cell membrane. In terms of biological role, regulates membrane-cell wall junctions and localized cell wall deposition. Required for establishment of the Casparian strip membrane domain (CSD) and the subsequent formation of Casparian strips, a cell wall modification of the root endodermis that determines an apoplastic barrier between the intraorganismal apoplasm and the extraorganismal apoplasm and prevents lateral diffusion. The polypeptide is Casparian strip membrane protein 1 (Vigna unguiculata (Cowpea)).